Here is a 773-residue protein sequence, read N- to C-terminus: Glucan endo-1,3-beta-D-glucosidase (773 aa).

The beta-sandwich subdomain stretch occupies residues 1–194 (MPPGAKVPQA…KNYFSIAVLP (194 aa)). In terms of domain architecture, GH81 spans 1–647 (MPPGAKVPQA…HWICNLDSLG (647 aa)). Residues Ile31, Asn34, Gln35, Tyr36, and Ala89 each coordinate Mg(2+). The interval 195–288 (DNTVSTLTYY…QGTSFKTVYR (94 aa)) is alpha/beta subdomain. The interval 298 to 647 (DKGTYDREAL…HWICNLDSLG (350 aa)) is (alpha/beta)6 barrel subdomain. Residues Tyr327 and Lys331 each coordinate (1,3-beta-D-glucosyl)n. Residues Asp365, Thr368, Glu373, and Lys376 each coordinate Ca(2+). (1,3-beta-D-glucosyl)n-binding residues include Asp402 and His406. Asp402 is an active-site residue. Ca(2+) is bound by residues Leu454, Arg455, and Phe457. (1,3-beta-D-glucosyl)n is bound by residues Asn477, Glu479, and Glu483. Catalysis depends on residues Glu479 and Glu483. Mg(2+) contacts are provided by Lys527, Lys618, Asn619, and Trp621. Ca(2+)-binding residues include Asp712, Asn714, Asp716, Gly717, Lys718, Asp723, Asp748, Ile749, Asn750, Asp752, Lys754, and Asp759.

Belongs to the glycosyl hydrolase 81 family. It depends on Ca(2+) as a cofactor. Mg(2+) is required as a cofactor.

It localises to the secreted. It carries out the reaction Hydrolysis of (1-&gt;3)-beta-D-glucosidic linkages in (1-&gt;3)-beta-D-glucans.. Its activity is regulated as follows. Inhibited by manganese, zinc, and copper ions. Cleaves internal linkages in 1,3-beta-glucan. May contribute to plant biomass degradation. This Acetivibrio thermocellus (strain ATCC 27405 / DSM 1237 / JCM 9322 / NBRC 103400 / NCIMB 10682 / NRRL B-4536 / VPI 7372) (Clostridium thermocellum) protein is Glucan endo-1,3-beta-D-glucosidase.